Here is a 256-residue protein sequence, read N- to C-terminus: Protein YIPF5 (256 aa).

At 1–125 (MSNFDNFNTD…ADGNIMNETD (125 aa)) the chain is on the cytoplasmic side. The chain crosses the membrane as a helical span at residues 126-146 (LAGPMVFCLAFGATLLLAGKI). Gln147 is a topological domain (lumenal). Residues 148–168 (FGYVYGISAIGCLGMYCLLNL) form a helical membrane-spanning segment. Residues 169 to 172 (MSMT) lie on the Cytoplasmic side of the membrane. Residues 173–193 (GVSFGCVSSVLGYCLLPMIIL) form a helical membrane-spanning segment. The Lumenal portion of the chain corresponds to 194–195 (SS). The helical transmembrane segment at 196-216 (FAVIFSLQGILGIVLAALIIG) threads the bilayer. Residues 217–235 (WCSFSASKIFISALAMDGQ) lie on the Cytoplasmic side of the membrane. A helical membrane pass occupies residues 236 to 256 (QVLVAYPCALLYGVFALISVF).

It belongs to the YIP1 family.

The protein resides in the endoplasmic reticulum membrane. Its subcellular location is the golgi apparatus. It is found in the cis-Golgi network membrane. Its function is as follows. Plays a role in transport between endoplasmic reticulum and Golgi. This is Protein YIPF5 (yipf5) from Xenopus tropicalis (Western clawed frog).